A 229-amino-acid chain; its full sequence is Indole-3-glycerol phosphate synthase (229 aa).

It belongs to the TrpC family.

The catalysed reaction is 1-(2-carboxyphenylamino)-1-deoxy-D-ribulose 5-phosphate + H(+) = (1S,2R)-1-C-(indol-3-yl)glycerol 3-phosphate + CO2 + H2O. Its pathway is amino-acid biosynthesis; L-tryptophan biosynthesis; L-tryptophan from chorismate: step 4/5. In Pyrococcus abyssi (strain GE5 / Orsay), this protein is Indole-3-glycerol phosphate synthase.